Reading from the N-terminus, the 217-residue chain is uncharacterized protein (217 aa).

One can recognise a PilZ domain in the interval 98–203; sequence QRRQYVRTDA…GDQQALLQYC (106 aa).

This is an uncharacterized protein from Bacillus subtilis (strain 168).